The chain runs to 89 residues: Small ribosomal subunit protein uS15 (89 aa).

Belongs to the universal ribosomal protein uS15 family. As to quaternary structure, part of the 30S ribosomal subunit. Forms a bridge to the 50S subunit in the 70S ribosome, contacting the 23S rRNA.

In terms of biological role, one of the primary rRNA binding proteins, it binds directly to 16S rRNA where it helps nucleate assembly of the platform of the 30S subunit by binding and bridging several RNA helices of the 16S rRNA. Functionally, forms an intersubunit bridge (bridge B4) with the 23S rRNA of the 50S subunit in the ribosome. This chain is Small ribosomal subunit protein uS15, found in Bacteroides thetaiotaomicron (strain ATCC 29148 / DSM 2079 / JCM 5827 / CCUG 10774 / NCTC 10582 / VPI-5482 / E50).